Here is a 260-residue protein sequence, read N- to C-terminus: tRNA (guanine-N(1)-)-methyltransferase (260 aa).

Residues Gly117 and 137–142 each bind S-adenosyl-L-methionine; that span reads LGDFVL.

This sequence belongs to the RNA methyltransferase TrmD family. As to quaternary structure, homodimer.

The protein resides in the cytoplasm. The catalysed reaction is guanosine(37) in tRNA + S-adenosyl-L-methionine = N(1)-methylguanosine(37) in tRNA + S-adenosyl-L-homocysteine + H(+). In terms of biological role, specifically methylates guanosine-37 in various tRNAs. The sequence is that of tRNA (guanine-N(1)-)-methyltransferase from Cupriavidus necator (strain ATCC 17699 / DSM 428 / KCTC 22496 / NCIMB 10442 / H16 / Stanier 337) (Ralstonia eutropha).